The chain runs to 94 residues: Co-chaperonin GroES (94 aa).

The protein belongs to the GroES chaperonin family. As to quaternary structure, heptamer of 7 subunits arranged in a ring. Interacts with the chaperonin GroEL.

It is found in the cytoplasm. Its function is as follows. Together with the chaperonin GroEL, plays an essential role in assisting protein folding. The GroEL-GroES system forms a nano-cage that allows encapsulation of the non-native substrate proteins and provides a physical environment optimized to promote and accelerate protein folding. GroES binds to the apical surface of the GroEL ring, thereby capping the opening of the GroEL channel. In Tetragenococcus halophilus (Pediococcus halophilus), this protein is Co-chaperonin GroES.